A 102-amino-acid polypeptide reads, in one-letter code: Protein 108 (102 aa).

The N-terminal stretch at 1–30 (MASVKSSSSSSSSSFISLLLLILLVIVLQS) is a signal peptide. 4 disulfide bridges follow: Cys-41–Cys-77, Cys-51–Cys-66, Cys-67–Cys-92, and Cys-79–Cys-99.

It belongs to the A9/FIL1 family. Stamen- and tapetum-specific.

It localises to the secreted. This chain is Protein 108, found in Solanum lycopersicum (Tomato).